Consider the following 374-residue polypeptide: Transaldolase (374 aa).

The active-site Schiff-base intermediate with substrate is the lysine 140.

It belongs to the transaldolase family. Type 2 subfamily.

Its subcellular location is the cytoplasm. It catalyses the reaction D-sedoheptulose 7-phosphate + D-glyceraldehyde 3-phosphate = D-erythrose 4-phosphate + beta-D-fructose 6-phosphate. It functions in the pathway carbohydrate degradation; pentose phosphate pathway; D-glyceraldehyde 3-phosphate and beta-D-fructose 6-phosphate from D-ribose 5-phosphate and D-xylulose 5-phosphate (non-oxidative stage): step 2/3. In terms of biological role, transaldolase is important for the balance of metabolites in the pentose-phosphate pathway. This Renibacterium salmoninarum (strain ATCC 33209 / DSM 20767 / JCM 11484 / NBRC 15589 / NCIMB 2235) protein is Transaldolase.